The primary structure comprises 731 residues: Probable G-protein coupled receptor 149 (731 aa).

Over 1–35 (MSLFLSNLSTNDSSLWKENHNSTDLLNPPGTLNIY) the chain is Extracellular. N-linked (GlcNAc...) asparagine glycosylation is found at Asn-7, Asn-11, and Asn-21. A helical membrane pass occupies residues 36-56 (LFCLTCLMTFAALVGSIYSLI). Residues 57–69 (SLLKMQNRTVVSM) lie on the Cytoplasmic side of the membrane. Residues 70 to 90 (LVASWSVDDLMSVLSVTIFMF) traverse the membrane as a helical segment. Topologically, residues 91 to 109 (LQWPNEVPGYFQFLCTTSA) are extracellular. The cysteines at positions 105 and 182 are disulfide-linked. A helical membrane pass occupies residues 110 to 132 (LMYLCQGLSSNLKATLLVSYNFY). The Cytoplasmic portion of the chain corresponds to 133–155 (TMHRGVGSQTASRRSGQVLGVVL). The chain crosses the membrane as a helical span at residues 156–176 (TVWAASLLLSALPLCGWGAFV). The Extracellular portion of the chain corresponds to 177–189 (RTPWGCLVDCSSS). Residues 190–210 (YVLFLSIVYALAFGLLVGLSV) form a helical membrane-spanning segment. The Cytoplasmic segment spans residues 211-310 (PLTHRLLCSE…SFTVSVAQKR (100 aa)). The interval 234-271 (RGASIPGTPPTAGRVVSLSPEDAPGPSLRRSGGCSPSS) is disordered. Residues 311–331 (FALILALTKVVLWLPMMMHMV) form a helical membrane-spanning segment. The Extracellular segment spans residues 332 to 342 (VQNVVGFQSLP). Residues 343 to 363 (LETFSFLLTLLATTVTPVFVL) traverse the membrane as a helical segment. Over 364–731 (SKRWTHLPCG…RKREEESKGS (368 aa)) the chain is Cytoplasmic. The disordered stretch occupies residues 475–526 (NTDITEAKQDSNNKKDAFSDKTGGDINYEETTFSEGPERRLSHEESQKPDLS). Composition is skewed to basic and acidic residues over residues 479 to 497 (TEAK…DKTG) and 510 to 526 (GPER…PDLS).

It belongs to the G-protein coupled receptor 1 family.

The protein resides in the cell membrane. Orphan receptor. The sequence is that of Probable G-protein coupled receptor 149 (GPR149) from Homo sapiens (Human).